The primary structure comprises 324 residues: Glucokinase (324 aa).

6-11 (IDIGGT) is an ATP binding site.

This sequence belongs to the bacterial glucokinase family.

It is found in the cytoplasm. It catalyses the reaction D-glucose + ATP = D-glucose 6-phosphate + ADP + H(+). This chain is Glucokinase, found in Zymomonas mobilis subsp. mobilis (strain ATCC 31821 / ZM4 / CP4).